The chain runs to 515 residues: Histidine ammonia-lyase (515 aa).

Residues 146 to 148 constitute a cross-link (5-imidazolinone (Ala-Gly)); it reads ASG. 2,3-didehydroalanine (Ser) is present on serine 147.

It belongs to the PAL/histidase family. In terms of processing, contains an active site 4-methylidene-imidazol-5-one (MIO), which is formed autocatalytically by cyclization and dehydration of residues Ala-Ser-Gly.

The protein localises to the cytoplasm. It carries out the reaction L-histidine = trans-urocanate + NH4(+). Its pathway is amino-acid degradation; L-histidine degradation into L-glutamate; N-formimidoyl-L-glutamate from L-histidine: step 1/3. In Ralstonia nicotianae (strain ATCC BAA-1114 / GMI1000) (Ralstonia solanacearum), this protein is Histidine ammonia-lyase (hutH).